We begin with the raw amino-acid sequence, 721 residues long: Polyribonucleotide nucleotidyltransferase (721 aa).

Aspartate 495 and aspartate 501 together coordinate Mg(2+). The region spanning 562 to 621 (PRLLSFRIDPELIGTVIGPGGRTIKGITERTNTKIDIEDGGIVTIASHDGAAAEEAQKII) is the KH domain. The S1 motif domain occupies 631–699 (GEIFSGVVTR…SRGRINLTLR (69 aa)). The interval 701-721 (VGQNNGMSYPEPTPTPVAPLN) is disordered. Residues 711–721 (EPTPTPVAPLN) show a composition bias toward pro residues.

This sequence belongs to the polyribonucleotide nucleotidyltransferase family. Mg(2+) serves as cofactor.

The protein localises to the cytoplasm. It carries out the reaction RNA(n+1) + phosphate = RNA(n) + a ribonucleoside 5'-diphosphate. Its function is as follows. Involved in mRNA degradation. Catalyzes the phosphorolysis of single-stranded polyribonucleotides processively in the 3'- to 5'-direction. In Prochlorococcus marinus (strain MIT 9215), this protein is Polyribonucleotide nucleotidyltransferase.